The following is a 624-amino-acid chain: Phosphatidylinositol 4-kinase lsb6 (624 aa).

Residues 1-31 (MESTFHSDTLDSFPNYQENSLNTNEEQTNPL) are compositionally biased toward polar residues. The interval 1–53 (MESTFHSDTLDSFPNYQENSLNTNEEQTNPLESLRDGWASSNSSSSSSLLLPD) is disordered. Residues 40 to 51 (SSNSSSSSSLLL) show a composition bias toward low complexity. In terms of domain architecture, PI3K/PI4K catalytic spans 145-520 (GVFPVLISKG…LLELPNLYVV (376 aa)). The interval 151-157 (ISKGSSG) is G-loop. A catalytic loop region spans residues 346-354 (RNTDRNLDN). The tract at residues 409 to 429 (AIDNSLAFPYKHPDSWRSFPY) is activation loop.

Belongs to the PI3/PI4-kinase family. The cofactor is Mg(2+). Requires Mn(2+) as cofactor.

Its subcellular location is the cell membrane. The protein localises to the vacuole membrane. It is found in the golgi apparatus membrane. It catalyses the reaction a 1,2-diacyl-sn-glycero-3-phospho-(1D-myo-inositol) + ATP = a 1,2-diacyl-sn-glycero-3-phospho-(1D-myo-inositol 4-phosphate) + ADP + H(+). Its function is as follows. May play a role in endocytic and/or exocytic pathways. This Schizosaccharomyces pombe (strain 972 / ATCC 24843) (Fission yeast) protein is Phosphatidylinositol 4-kinase lsb6 (lsb6).